The sequence spans 474 residues: NADH-ubiquinone oxidoreductase chain 4 (474 aa).

Transmembrane regions (helical) follow at residues 34-54 (SFFLMLVLALFCALFTFDLMF), 86-106 (LYGLILVFLCLLTGFVAISTV), 115-135 (LKFYLIFFQFFLAVLGFIKCS), 137-157 (LIAFFFFYEVLMLGSVLVVFF), 167-187 (AVIYFVAWTQLGSLFVLLACL), 211-231 (AMTIYSLLFVGFGIKFPIWPL), 242-262 (ASTGFSIYLSGFLVKTALFGF), 276-295 (TFFLAVLVAGVIDSSLNMWS), 302-322 (LVAYCTIQEMNLIAIFFLKGD), 325-345 (LIAYGFLFTIMHALMSTLMFF), 373-393 (ALAIIFMVLFFSGILGTLKFV), 405-425 (VSWPIGVIFVVVVSAIGLIGF), and 454-474 (YIIFLCFAGLIFLTFLPFLMI).

This sequence belongs to the complex I subunit 4 family.

The protein localises to the mitochondrion membrane. It catalyses the reaction a ubiquinone + NADH + 5 H(+)(in) = a ubiquinol + NAD(+) + 4 H(+)(out). Its function is as follows. Core subunit of the mitochondrial membrane respiratory chain NADH dehydrogenase (Complex I) that is believed to belong to the minimal assembly required for catalysis. Complex I functions in the transfer of electrons from NADH to the respiratory chain. The immediate electron acceptor for the enzyme is believed to be ubiquinone. This chain is NADH-ubiquinone oxidoreductase chain 4 (ND4), found in Paramecium tetraurelia.